Reading from the N-terminus, the 299-residue chain is Acetylglutamate kinase (299 aa).

Substrate-binding positions include 72–73, R94, and N196; that span reads GG.

The protein belongs to the acetylglutamate kinase family. ArgB subfamily.

It is found in the cytoplasm. It carries out the reaction N-acetyl-L-glutamate + ATP = N-acetyl-L-glutamyl 5-phosphate + ADP. Its pathway is amino-acid biosynthesis; L-arginine biosynthesis; N(2)-acetyl-L-ornithine from L-glutamate: step 2/4. In terms of biological role, catalyzes the ATP-dependent phosphorylation of N-acetyl-L-glutamate. This Burkholderia ambifaria (strain MC40-6) protein is Acetylglutamate kinase.